Here is a 635-residue protein sequence, read N- to C-terminus: Threonine--tRNA ligase (635 aa).

The TGS domain occupies 1–58 (MIRVICNNETVELPKGATAADFASKIKNSHYFAGVVINDQIKDLSTTLNEGDTLRFVT). The segment at 237–528 (DHRVLGAKLD…LIEHFKGKFP (292 aa)) is catalytic. Residues cysteine 328, histidine 379, and histidine 505 each contribute to the Zn(2+) site.

The protein belongs to the class-II aminoacyl-tRNA synthetase family. In terms of assembly, homodimer. Zn(2+) serves as cofactor.

The protein localises to the cytoplasm. The enzyme catalyses tRNA(Thr) + L-threonine + ATP = L-threonyl-tRNA(Thr) + AMP + diphosphate + H(+). Its function is as follows. Catalyzes the attachment of threonine to tRNA(Thr) in a two-step reaction: L-threonine is first activated by ATP to form Thr-AMP and then transferred to the acceptor end of tRNA(Thr). Also edits incorrectly charged L-seryl-tRNA(Thr). The chain is Threonine--tRNA ligase from Chlamydia caviae (strain ATCC VR-813 / DSM 19441 / 03DC25 / GPIC) (Chlamydophila caviae).